We begin with the raw amino-acid sequence, 183 residues long: Segregation and condensation protein B (183 aa).

The protein belongs to the ScpB family. In terms of assembly, homodimer. Homodimerization may be required to stabilize the binding of ScpA to the Smc head domains. Component of a cohesin-like complex composed of ScpA, ScpB and the Smc homodimer, in which ScpA and ScpB bind to the head domain of Smc. The presence of the three proteins is required for the association of the complex with DNA.

Its subcellular location is the cytoplasm. Participates in chromosomal partition during cell division. May act via the formation of a condensin-like complex containing Smc and ScpA that pull DNA away from mid-cell into both cell halves. The protein is Segregation and condensation protein B of Streptococcus pyogenes serotype M1.